A 134-amino-acid polypeptide reads, in one-letter code: Large ribosomal subunit protein uL16c (134 aa).

Residues 1-17 are compositionally biased toward basic residues; it reads MLSPKRTRFRKQHRGRM. The segment at 1-22 is disordered; that stretch reads MLSPKRTRFRKQHRGRMKGISS.

Belongs to the universal ribosomal protein uL16 family. In terms of assembly, part of the 50S ribosomal subunit.

The protein resides in the plastid. It is found in the chloroplast. This chain is Large ribosomal subunit protein uL16c, found in Solanum tuberosum (Potato).